Reading from the N-terminus, the 333-residue chain is DNA-directed RNA polymerase subunit alpha (333 aa).

The segment at 1–234 (MQSSVNEFLT…QQLAAFVDLK (234 aa)) is alpha N-terminal domain (alpha-NTD). An alpha C-terminal domain (alpha-CTD) region spans residues 248–333 (IDPILLRPVD…SLKKDDKATA (86 aa)).

This sequence belongs to the RNA polymerase alpha chain family. In terms of assembly, homodimer. The RNAP catalytic core consists of 2 alpha, 1 beta, 1 beta' and 1 omega subunit. When a sigma factor is associated with the core the holoenzyme is formed, which can initiate transcription.

It catalyses the reaction RNA(n) + a ribonucleoside 5'-triphosphate = RNA(n+1) + diphosphate. Functionally, DNA-dependent RNA polymerase catalyzes the transcription of DNA into RNA using the four ribonucleoside triphosphates as substrates. This chain is DNA-directed RNA polymerase subunit alpha, found in Pseudomonas aeruginosa (strain UCBPP-PA14).